A 116-amino-acid polypeptide reads, in one-letter code: NADH-quinone oxidoreductase subunit A (116 aa).

Transmembrane regions (helical) follow at residues 3 to 23, 61 to 81, and 88 to 108; these read FTFLVVVLLTALAFVGVVIAL, FAILFLMFDVETAFLFPWAVV, and QGLVSILFFFIILVLGLAYAW.

The protein belongs to the complex I subunit 3 family. As to quaternary structure, NDH-1 is composed of 14 different subunits. Subunits NuoA, H, J, K, L, M, N constitute the membrane sector of the complex.

The protein localises to the cell inner membrane. The catalysed reaction is a quinone + NADH + 5 H(+)(in) = a quinol + NAD(+) + 4 H(+)(out). NDH-1 shuttles electrons from NADH, via FMN and iron-sulfur (Fe-S) centers, to quinones in the respiratory chain. The immediate electron acceptor for the enzyme in this species is believed to be a menaquinone. Couples the redox reaction to proton translocation (for every two electrons transferred, four hydrogen ions are translocated across the cytoplasmic membrane), and thus conserves the redox energy in a proton gradient. The polypeptide is NADH-quinone oxidoreductase subunit A (Bacteroides thetaiotaomicron (strain ATCC 29148 / DSM 2079 / JCM 5827 / CCUG 10774 / NCTC 10582 / VPI-5482 / E50)).